The primary structure comprises 92 residues: Antifungal protein B (92 aa).

A signal peptide spans 1 to 18; sequence MQITSIAIVFFAAMGAVA. Positions 19-34 are excised as a propeptide; it reads NPIARESDDLDARDVQ. Disulfide bonds link Cys42-Cys70, Cys49-Cys77, and Cys62-Cys88.

The protein resides in the secreted. It is found in the host cytoplasm. Its function is as follows. Antifungal protein that acts as an inhibitor of growth of human pathogenic molds and yeasts. Is active against the model organism Neurospora crassa, the opportunistic human pathogens Aspergillus fumigatus, Trichophyton rubrum, and Aspergillus terreus. Provokes a reduction of the incidence of infections caused by Penicillium digitatum and Penicillium italicum in oranges and by Penicillium expansum in apples. Low doses of pafB have self-inhibition activity. Also shows activity against the model yeast Saccaromyces cerevisiae and the opportunistic human pathogen Candida albicans. No antibacterial activity is observed on the Gram-negative Escherichia coli and the Gram-positive Bacillus subtilis. Finally, also shows anti-viral activity in a model of HCoV 229E infected L132 cells. The protein is Antifungal protein B of Penicillium chrysogenum (Penicillium notatum).